The following is a 491-amino-acid chain: G2/mitotic-specific cyclin-A (491 aa).

The segment at 1 to 21 (MASFQIHQDMSNKENPGIKIP) is disordered. In terms of domain architecture, Cyclin N-terminal spans 206–332 (DILEYFRESE…ILKILSFDLC (127 aa)).

It belongs to the cyclin family. Cyclin AB subfamily. As to quaternary structure, component of the Frs-CycA-Cdk1 complex composed of CycA, Cdk1 and Z600. Interacts (via C-terminus) with Z600. Interacts with otu and (via C-terminus) with bam; the interaction stabilizes CycA by negatively regulating its ubiquitination. Ubiquitinated. Ubiquitination state is negatively regulated by a deubiquitinase complex made up of bam and otu.

In terms of biological role, essential for the control of the cell cycle at the G2/M (mitosis) transition. Interacts with the Cdk1 and Cdk2 protein kinases to form MPF. G2/M cyclins accumulate steadily during G2 and are abruptly destroyed at mitosis. This chain is G2/mitotic-specific cyclin-A (CycA), found in Drosophila melanogaster (Fruit fly).